Reading from the N-terminus, the 372-residue chain is MARKSQMVEAFGWAARDASGVLSPFKFLRRATGERDVQFKVLYCGICDWDMIVLKDGFGTTTYPVVPGHEIVGVVTEVGSKVQKFKVGDTVGVGTLVGSCRTCKKCKNDLENYCHSYLMADGACYTYGNTVCGDMSTRAYGGYSDIMVVDEYFAIVWPAKNYPLAAGVPLLCGGIVAYSPMRYYGLDEPGMHIGIVGLGGIGRMAVKFAKAFGAKVTVISTSINKKQEALEKFGADSFLFSKDTEEMEAAADTLDGIIDTAPKIHPIAPLIDLLKFEGKLILLGAVEESYELPASPLIVERKMVAGSASGSVKEIQEMMDFAAKHNIVAEIEIIPIDYVNIAIGRIEKGDATDRFVIDIANTLKSGEDVNSS.

Zn(2+) contacts are provided by cysteine 47, aspartate 50, histidine 69, glutamate 70, cysteine 100, cysteine 103, cysteine 106, cysteine 114, and cysteine 172. NADP(+) contacts are provided by residues 197–202 (GLGGIG), lysine 226, 283–285 (LGA), serine 307, and arginine 354.

Belongs to the zinc-containing alcohol dehydrogenase family. In terms of assembly, homodimer. It depends on Zn(2+) as a cofactor. Mainly expressed in roots.

It carries out the reaction (19E)-cur-19-en-17-al + NADP(+) = norfluorocurarine + NADPH + H(+). The catalysed reaction is 17,18-epoxy-17-hydroxycur-19-ene + NADP(+) = 18-hydroxynorfluorocurarine + NADPH + H(+). Its pathway is alkaloid biosynthesis. Alcohol dehydrogenase involved in the biosynthesis of curare monoterpene indole alkaloids (MIAs), natural products such as strychnine, a neurotoxic compound used as a pesticide to control rodents, and its pharmacologically active derivatives, including brucine, used to regulate blood pressure. Curare alkaloids act as animal glycine receptor antagonists. Catalyzes the conversion of norfluorocurarine to desoxy Wieland-Gumlich aldehyde, and of 18-OH norfluorocurarine to Wieland-Gumlich aldehyde. The protein is 18-hydroxynorfluorocurarine reductase of Strychnos nux-vomica (Poison nut).